The chain runs to 1221 residues: DNA replication helicase (1221 aa).

The short motif at 692–701 (PKCKCYKKIK) is the Nuclear localization signal element. 917 to 924 (GEPGSGKS) is a binding site for ATP. Residues 967-981 (INELKQCSESYFKKH) constitute a DNA-binding region (H-T-H motif).

Interacts with IE1 and LEF-3.

Its subcellular location is the host nucleus. The catalysed reaction is ATP + H2O = ADP + phosphate + H(+). Functionally, essential for initiation of viral DNA replication, it may contribute to other functions such as controlling the switch to the late phase and leading to the inhibition of host protein synthesis. Required for late and very late gene expression. The polypeptide is DNA replication helicase (HELI) (Lepidoptera (butterflies and moths)).